The following is a 501-amino-acid chain: MDTGGNSLASGPDGVKRKVCYFYDPEVGNYYYGQGHPMKPHRIRMTHALLAHYGLLQHMQVLKPFPARDRDLCRFHADDYVSFLRSITPETQQDQIRQLKRFNVGEDCPVFDGLYSFCQTYAGGSVGGSVKLNHGLCDIAINWAGGLHHAKKCEASGFCYVNDIVLAILELLKQHERVLYVDIDIHHGDGVEEAFYATDRVMTVSFHKFGDYFPGTGHIQDIGYGSGKYYSLNVPLDDGIDDESYHLLFKPIMGKVMEIFRPGAVVLQCGADSLSGDRLGCFNLSIKGHAECVKFMRSFNVPLLLLGGGGYTIRNVARCWCYETGVALGVEVEDKMPEHEYYEYFGPDYTLHVAPSNMENKNSRQMLEEIRNDLLHNLSKLQHAPSVPFQERPPDTETPEVDEDQEDGDKRWDPDSDMDVDDDRKPIPSRVKREAVEPDTKDKDGLKGIMERGKGCEVEVDESGSTKVTGVNPVGVEEASVKMEEEGTNKGGAEQAFPPKT.

A histone deacetylase region spans residues 17–329 (RKVCYFYDPE…WCYETGVALG (313 aa)). Histidine 149 functions as the Proton donor/acceptor in the catalytic mechanism. 3 residues coordinate Zn(2+): aspartate 184, histidine 186, and aspartate 272. The segment at 383 to 501 (HAPSVPFQER…GAEQAFPPKT (119 aa)) is disordered. The segment covering 397–407 (ETPEVDEDQED) has biased composition (acidic residues). Residue serine 416 is modified to Phosphoserine. 2 stretches are compositionally biased toward basic and acidic residues: residues 422–457 (DDRK…KGCE) and 479–488 (ASVKMEEEGT).

The protein belongs to the histone deacetylase family. HD type 1 subfamily. Interacts with SIN3, SAP18 and TPR1. Interacts with CDKE-1, MED14 and LUG. Interacts with TPL. Interacts with AHL22. Zn(2+) serves as cofactor. As to expression, highly expressed in leaves, stems, flowers and young siliques.

It localises to the nucleus. The catalysed reaction is N(6)-acetyl-L-lysyl-[histone] + H2O = L-lysyl-[histone] + acetate. In terms of biological role, responsible for the deacetylation of lysine residues on the N-terminal part of the core histones (H2A, H2B, H3 and H4). Histone deacetylation gives a tag for epigenetic repression and plays an important role in transcriptional regulation, cell cycle progression and developmental events. Histone deacetylases act via the formation of large multiprotein complexes. HDA19 is involved in jasmonic acid and ethylene signaling of pathogen response. Part of a repressor complex including APETALA2 (AP2) and TOPLESS (TPL) that control the expression domains of numerous floral organ identity genes. Involved in negative regulation of salinity stress response. Represses the expression of stress tolerance-related genes, genes coding for late embryogenesis abundant (LEA) proteins that prevent protein aggregation, and positive regulators of abscisic acid (ABA) signaling, such as ABI5 and NAC019. This is Histone deacetylase 19 from Arabidopsis thaliana (Mouse-ear cress).